Reading from the N-terminus, the 488-residue chain is Multidrug resistance outer membrane protein MdtP (488 aa).

The first 23 residues, 1–23 (MINRQLSRLLLCSILGSTTLISG), serve as a signal peptide directing secretion. Cys24 carries N-palmitoyl cysteine lipidation. Cys24 carries the S-diacylglycerol cysteine lipid modification.

This sequence belongs to the outer membrane factor (OMF) (TC 1.B.17) family. As to quaternary structure, could be part of a tripartite efflux system composed of MdtN, MdtO and MdtP.

It localises to the cell outer membrane. Could be involved in resistance to puromycin, acriflavine and tetraphenylarsonium chloride. The sequence is that of Multidrug resistance outer membrane protein MdtP (mdtP) from Escherichia coli O157:H7.